We begin with the raw amino-acid sequence, 240 residues long: Pyridoxine 5'-phosphate synthase (240 aa).

3-amino-2-oxopropyl phosphate is bound at residue asparagine 6. Position 8-9 (8-9) interacts with 1-deoxy-D-xylulose 5-phosphate; the sequence is DH. Arginine 17 lines the 3-amino-2-oxopropyl phosphate pocket. Residue histidine 42 is the Proton acceptor of the active site. 1-deoxy-D-xylulose 5-phosphate-binding residues include arginine 44 and histidine 49. Glutamate 69 serves as the catalytic Proton acceptor. Residue threonine 99 coordinates 1-deoxy-D-xylulose 5-phosphate. Histidine 193 serves as the catalytic Proton donor. Residues glycine 194 and 216-217 each bind 3-amino-2-oxopropyl phosphate; that span reads GH.

The protein belongs to the PNP synthase family. Homooctamer; tetramer of dimers.

It localises to the cytoplasm. The catalysed reaction is 3-amino-2-oxopropyl phosphate + 1-deoxy-D-xylulose 5-phosphate = pyridoxine 5'-phosphate + phosphate + 2 H2O + H(+). It functions in the pathway cofactor biosynthesis; pyridoxine 5'-phosphate biosynthesis; pyridoxine 5'-phosphate from D-erythrose 4-phosphate: step 5/5. In terms of biological role, catalyzes the complicated ring closure reaction between the two acyclic compounds 1-deoxy-D-xylulose-5-phosphate (DXP) and 3-amino-2-oxopropyl phosphate (1-amino-acetone-3-phosphate or AAP) to form pyridoxine 5'-phosphate (PNP) and inorganic phosphate. This is Pyridoxine 5'-phosphate synthase from Hydrogenobaculum sp. (strain Y04AAS1).